The primary structure comprises 409 residues: Arginine deiminase (409 aa).

The Amidino-cysteine intermediate role is filled by Cys-399.

This sequence belongs to the arginine deiminase family.

It localises to the cytoplasm. It catalyses the reaction L-arginine + H2O = L-citrulline + NH4(+). It participates in amino-acid degradation; L-arginine degradation via ADI pathway; carbamoyl phosphate from L-arginine: step 1/2. In Streptococcus pneumoniae (strain P1031), this protein is Arginine deiminase.